The sequence spans 309 residues: Olfactory receptor 14A16 (309 aa).

Topologically, residues M1 to I23 are extracellular. N-linked (GlcNAc...) asparagine glycosylation is present at N3. Residues L24–I44 form a helical membrane-spanning segment. Residues M45–H52 lie on the Cytoplasmic side of the membrane. A helical membrane pass occupies residues L53–S73. Residues V74–S97 are Extracellular-facing. N-linked (GlcNAc...) asparagine glycosylation is present at N87. C95 and C187 form a disulfide bridge. A helical transmembrane segment spans residues Q98–F118. The Cytoplasmic segment spans residues D119–D131. The chain crosses the membrane as a helical span at residues V132–L152. Residues I153–E194 are Extracellular-facing. A helical membrane pass occupies residues I195–T215. The Cytoplasmic segment spans residues Y216–A235. A helical transmembrane segment spans residues Y236–A255. Residues Y256 to D268 are Extracellular-facing. A helical membrane pass occupies residues A269–L289. Over R290–K309 the chain is Cytoplasmic.

This sequence belongs to the G-protein coupled receptor 1 family.

It is found in the cell membrane. Odorant receptor. This is Olfactory receptor 14A16 (OR14A16) from Homo sapiens (Human).